The sequence spans 369 residues: Uroporphyrinogen decarboxylase (369 aa).

Residues 36-40, D86, Y162, S217, and H342 contribute to the substrate site; that span reads RQAGR.

It belongs to the uroporphyrinogen decarboxylase family. As to quaternary structure, homodimer.

It is found in the cytoplasm. It catalyses the reaction uroporphyrinogen III + 4 H(+) = coproporphyrinogen III + 4 CO2. It functions in the pathway porphyrin-containing compound metabolism; protoporphyrin-IX biosynthesis; coproporphyrinogen-III from 5-aminolevulinate: step 4/4. Functionally, catalyzes the decarboxylation of four acetate groups of uroporphyrinogen-III to yield coproporphyrinogen-III. The protein is Uroporphyrinogen decarboxylase of Albidiferax ferrireducens (strain ATCC BAA-621 / DSM 15236 / T118) (Rhodoferax ferrireducens).